A 395-amino-acid chain; its full sequence is ATP phosphoribosyltransferase regulatory subunit (395 aa).

It belongs to the class-II aminoacyl-tRNA synthetase family. HisZ subfamily. Heteromultimer composed of HisG and HisZ subunits.

It is found in the cytoplasm. Its pathway is amino-acid biosynthesis; L-histidine biosynthesis; L-histidine from 5-phospho-alpha-D-ribose 1-diphosphate: step 1/9. Required for the first step of histidine biosynthesis. May allow the feedback regulation of ATP phosphoribosyltransferase activity by histidine. The polypeptide is ATP phosphoribosyltransferase regulatory subunit (Pseudomonas fluorescens (strain ATCC BAA-477 / NRRL B-23932 / Pf-5)).